The chain runs to 399 residues: Elongation factor Tu (399 aa).

The tr-type G domain maps to lysine 10–glutamine 207. The G1 stretch occupies residues glycine 19–threonine 26. Glycine 19–threonine 26 is a binding site for GTP. Threonine 26 contacts Mg(2+). The G2 stretch occupies residues glycine 60–asparagine 64. Residues aspartate 81 to glycine 84 form a G3 region. Residues aspartate 81–histidine 85 and asparagine 136–aspartate 139 each bind GTP. Residues asparagine 136 to aspartate 139 form a G4 region. The interval serine 174–leucine 176 is G5.

It belongs to the TRAFAC class translation factor GTPase superfamily. Classic translation factor GTPase family. EF-Tu/EF-1A subfamily. In terms of assembly, monomer.

It is found in the cytoplasm. It catalyses the reaction GTP + H2O = GDP + phosphate + H(+). GTP hydrolase that promotes the GTP-dependent binding of aminoacyl-tRNA to the A-site of ribosomes during protein biosynthesis. This Kosmotoga olearia (strain ATCC BAA-1733 / DSM 21960 / TBF 19.5.1) protein is Elongation factor Tu.